The following is a 501-amino-acid chain: Microtubule-associated protein mmb1 (501 aa).

Composition is skewed to polar residues over residues 61–95, 103–122, and 132–168; these read NISSPSVPTSQSRVTQGQSLGNTQISNPTSKTNNV, RNPSQRLRPSTSLARLSNNA, and HENSISSKESPSVTTSKHVATITKPSTSSIARMSSNA. 3 disordered regions span residues 61–274, 328–381, and 478–501; these read NISS…VKVN, VSRN…TTGN, and NQTSEINDTNHSSHSSPLDLNRMI. A compositionally biased stretch (low complexity) spans 234 to 252; sequence SSVVRPPTRTSTTRPLSRV. 3 stretches are compositionally biased toward polar residues: residues 253 to 274, 367 to 381, and 478 to 495; these read NVTNASGSISKNSTSPSKVKVN, SRIQSTLSSRTTTGN, and NQTSEINDTNHSSHSSPL.

It is found in the cytoplasm. It localises to the cytoskeleton. In terms of biological role, involved in the cell polarity process and in regulation of microtubule growth. Has a role in meiosis. Involved in microtubule dynamics. Binds to mitochondria and microtubules, attaching the tubular mitochondria to the microtubule lattice at multiple discrete interaction sites. The chain is Microtubule-associated protein mmb1 from Schizosaccharomyces pombe (strain 972 / ATCC 24843) (Fission yeast).